The chain runs to 313 residues: Putative S-adenosyl-L-methionine-dependent methyltransferase MUL_0706 (313 aa).

Residues Asp132 and 161 to 162 (DL) each bind S-adenosyl-L-methionine.

The protein belongs to the UPF0677 family.

In terms of biological role, exhibits S-adenosyl-L-methionine-dependent methyltransferase activity. The protein is Putative S-adenosyl-L-methionine-dependent methyltransferase MUL_0706 of Mycobacterium ulcerans (strain Agy99).